The chain runs to 335 residues: tRNA-dihydrouridine(20/20a) synthase (335 aa).

FMN contacts are provided by residues 20–22 and Gln72; that span reads PML. The Proton donor role is filled by Cys102. FMN is bound by residues Lys141, His173, 213–215, and 235–236; these read NGG and GR.

This sequence belongs to the Dus family. DusA subfamily. The cofactor is FMN.

It catalyses the reaction 5,6-dihydrouridine(20) in tRNA + NADP(+) = uridine(20) in tRNA + NADPH + H(+). The catalysed reaction is 5,6-dihydrouridine(20) in tRNA + NAD(+) = uridine(20) in tRNA + NADH + H(+). The enzyme catalyses 5,6-dihydrouridine(20a) in tRNA + NADP(+) = uridine(20a) in tRNA + NADPH + H(+). It carries out the reaction 5,6-dihydrouridine(20a) in tRNA + NAD(+) = uridine(20a) in tRNA + NADH + H(+). Functionally, catalyzes the synthesis of 5,6-dihydrouridine (D), a modified base found in the D-loop of most tRNAs, via the reduction of the C5-C6 double bond in target uridines. Specifically modifies U20 and U20a in tRNAs. In Shewanella oneidensis (strain ATCC 700550 / JCM 31522 / CIP 106686 / LMG 19005 / NCIMB 14063 / MR-1), this protein is tRNA-dihydrouridine(20/20a) synthase.